A 295-amino-acid chain; its full sequence is Serpentine receptor class gamma-53 (295 aa).

Helical transmembrane passes span 7-27, 39-61, 121-141, 173-193, 211-230, and 241-261; these read IWLC…VLLS, VITM…RMVF, FYLL…QLLY, CFMS…LYQV, MSLI…AWQT, and IELL…ILLI.

It belongs to the nematode receptor-like protein srg family.

The protein localises to the membrane. This is Serpentine receptor class gamma-53 (srg-53) from Caenorhabditis elegans.